Reading from the N-terminus, the 334-residue chain is Protein-methionine-sulfoxide reductase catalytic subunit MsrP (334 aa).

A signal peptide (tat-type signal) is located at residues 1–44 (MKKNQFLKESDVTAESVFFMKRRQVLKALGISAAALSLPHAAHA). Mo-molybdopterin-binding positions include Asn88, 91 to 92 (YE), Cys146, Thr181, Asn233, Arg238, and 249 to 251 (GIK).

The protein belongs to the MsrP family. In terms of assembly, heterodimer of a catalytic subunit (MsrP) and a heme-binding subunit (MsrQ). The cofactor is Mo-molybdopterin. Predicted to be exported by the Tat system. The position of the signal peptide cleavage has not been experimentally proven.

The protein localises to the periplasm. The catalysed reaction is L-methionyl-[protein] + a quinone + H2O = L-methionyl-(S)-S-oxide-[protein] + a quinol. It catalyses the reaction L-methionyl-[protein] + a quinone + H2O = L-methionyl-(R)-S-oxide-[protein] + a quinol. Its function is as follows. Part of the MsrPQ system that repairs oxidized periplasmic proteins containing methionine sulfoxide residues (Met-O), using respiratory chain electrons. Thus protects these proteins from oxidative-stress damage caused by reactive species of oxygen and chlorine generated by the host defense mechanisms. MsrPQ is essential for the maintenance of envelope integrity under bleach stress, rescuing a wide series of structurally unrelated periplasmic proteins from methionine oxidation, including the primary periplasmic chaperone SurA and the lipoprotein Pal. The catalytic subunit MsrP is non-stereospecific, being able to reduce both (R-) and (S-) diastereoisomers of methionine sulfoxide. The chain is Protein-methionine-sulfoxide reductase catalytic subunit MsrP from Escherichia coli O17:K52:H18 (strain UMN026 / ExPEC).